A 131-amino-acid chain; its full sequence is Histone H2B.2 (131 aa).

The span at 1–19 shows a compositional bias: basic and acidic residues; it reads MSAKAEKKPASKAPAEKKP. Residues 1–38 are disordered; the sequence is MSAKAEKKPASKAPAEKKPAAKKTAPSSDGKKRTKARK. N6-acetyllysine; alternate is present on residues Lys-7 and Lys-8. Glycyl lysine isopeptide (Lys-Gly) (interchain with G-Cter in SUMO); alternate cross-links involve residues Lys-7 and Lys-8. Ser-11 is modified (phosphoserine). Residue Lys-12 is modified to N6-acetyllysine. Lys-17 carries the N6-acetyllysine; alternate modification. Lys-17 is covalently cross-linked (Glycyl lysine isopeptide (Lys-Gly) (interchain with G-Cter in SUMO); alternate). Residue Lys-18 forms a Glycyl lysine isopeptide (Lys-Gly) (interchain with G-Cter in SUMO) linkage. Lys-124 participates in a covalent cross-link: Glycyl lysine isopeptide (Lys-Gly) (interchain with G-Cter in ubiquitin).

Belongs to the histone H2B family. In terms of assembly, the nucleosome is a histone octamer containing two molecules each of H2A, H2B, H3 and H4 assembled in one H3-H4 heterotetramer and two H2A-H2B heterodimers. The octamer wraps approximately 147 bp of DNA. In terms of processing, monoubiquitinated by the UBC2-BRE1 complex to form H2BK123ub1. H2BK123ub1 gives a specific tag for epigenetic transcriptional activation and is also prerequisite for H3K4me and H3K79me formation. H2BK123ub1 also modulates the formation of double-strand breaks during meiosis and is a prerequisite for DNA-damage checkpoint activation. Post-translationally, phosphorylated by STE20 to form H2BS10ph during progression through meiotic prophase. May be correlated with chromosome condensation. Acetylated by GCN5 to form H2BK11ac and H2BK16ac. H2BK16ac can also be formed by ESA1. Acetylation of N-terminal lysines and particularly formation of H2BK11acK16ac has a positive effect on transcription. In terms of processing, sumoylation to form H2BK6su or H2BK7su, and probably also H2BK16su or H2BK17su, occurs preferentially near the telomeres and represses gene transcription.

Its subcellular location is the nucleus. It is found in the chromosome. Core component of nucleosome. Nucleosomes wrap and compact DNA into chromatin, limiting DNA accessibility to the cellular machineries which require DNA as a template. Histones thereby play a central role in transcription regulation, DNA repair, DNA replication and chromosomal stability. DNA accessibility is regulated via a complex set of post-translational modifications of histones, also called histone code, and nucleosome remodeling. This Candida glabrata (strain ATCC 2001 / BCRC 20586 / JCM 3761 / NBRC 0622 / NRRL Y-65 / CBS 138) (Yeast) protein is Histone H2B.2 (HTB2).